The following is a 230-amino-acid chain: 2,3-bisphosphoglycerate-dependent phosphoglycerate mutase 2 (230 aa).

Substrate-binding positions include 8-15 (RHGQSEWN), 21-22 (TG), Arg60, 87-90 (ERHY), Lys98, 114-115 (RR), and 183-184 (GN). The active-site Tele-phosphohistidine intermediate is His9. The Proton donor/acceptor role is filled by Glu87.

It belongs to the phosphoglycerate mutase family. BPG-dependent PGAM subfamily.

It carries out the reaction (2R)-2-phosphoglycerate = (2R)-3-phosphoglycerate. It functions in the pathway carbohydrate degradation; glycolysis; pyruvate from D-glyceraldehyde 3-phosphate: step 3/5. In terms of biological role, catalyzes the interconversion of 2-phosphoglycerate and 3-phosphoglycerate. This chain is 2,3-bisphosphoglycerate-dependent phosphoglycerate mutase 2, found in Lactiplantibacillus plantarum (strain ATCC BAA-793 / NCIMB 8826 / WCFS1) (Lactobacillus plantarum).